Reading from the N-terminus, the 551-residue chain is Alkaline/neutral invertase CINV1 (551 aa).

Methionine 1 is subject to N-acetylmethionine. Residues serine 11, serine 14, serine 44, and serine 61 each carry the phosphoserine modification. Positions 50–74 are disordered; that stretch reads TGYSRHDGIHDSPRGRSVLDTPLSS. The span at 53 to 63 shows a compositional bias: basic and acidic residues; that stretch reads SRHDGIHDSPR. Phosphothreonine is present on threonine 70. Serine 547 carries the phosphoserine modification.

This sequence belongs to the glycosyl hydrolase 100 family. Forms homohexamers. Interacts with PIP5K9. Interaction with PIP5K9 represses CINV1 activity. Interacts with GRF1, GRF2, GRF3, GRF4, GRF5, GRF6, GRF7, GRF8 and GRF10; these interactions are dependent of the phosphorylation at Ser-547. Post-translationally, phosphorylated at Ser-547 by CPK3 and CPK21. In terms of tissue distribution, expressed in radicle, hypocotyls, root tips and vascular cylinder, leaf vasculature, shoot stipules, trichomes, stem, stigma apex and base of siliques.

The protein localises to the cytoplasm. It is found in the cytosol. Its subcellular location is the nucleus. The enzyme catalyses Hydrolysis of terminal non-reducing beta-D-fructofuranoside residues in beta-D-fructofuranosides.. In terms of biological role, cytosolic invertase that specifically cleaves sucrose into glucose and fructose and is involved in the regulation of multiple tissue development including primary root elongation, root hair growth, leaf and silique development, and floral transition. Is involved in osmotic stress-induced inhibition on lateral root growth by controlling the concentration of hexose in cells. May regulate sugar-mediated root development by controlling sucrose catabolism in root cells. Contributes to carbon partitioning and cellulose biosynthesis in seedlings. This is Alkaline/neutral invertase CINV1 from Arabidopsis thaliana (Mouse-ear cress).